A 372-amino-acid polypeptide reads, in one-letter code: Envelope phospholipase OPG057 (372 aa).

Residues 153–156 (YPPL) carry the YPPL motif. 2 S-palmitoyl cysteine; by host lipidation sites follow: cysteine 185 and cysteine 186. Residues 307–334 (FTIQNNTKLLIVDDEYVHITSANFDGTH) form the PLD phosphodiesterase domain.

The protein belongs to the orthopoxvirus OPG057 family. As to quaternary structure, interacts with protein OPG190. Palmitoylated. Attachment of the palmitate moiety is essential for correct intracellular targeting and protein function.

The protein localises to the virion membrane. It localises to the host Golgi apparatus. Its subcellular location is the host trans-Golgi network. It is found in the host endoplasmic reticulum membrane. The enzyme catalyses a 1,2-diacyl-sn-glycero-3-phosphocholine + H2O = a 1,2-diacyl-sn-glycero-3-phosphate + choline + H(+). Its function is as follows. Major envelope protein that plays a role in the biogenesis of the viral double membrane and in egress of virus from the host cell. Produces the wrapped form of virus that is required for cell-to-cell spread. Acts as a lipase with broad specificity including phospholipase C, phospholipase A, and triacylglycerol lipase activities. The polypeptide is Envelope phospholipase OPG057 (OPG057) (Homo sapiens (Human)).